The primary structure comprises 439 residues: MSIDVNWRFATSGPDGEALAERIRSFIHDRFQQVALPRFIRSVQVHAFDFGTIPPELEIKDFCEPFADFYEEDDDDHTSDASEERGEEHSSRWNSTHPELNEPSYREDTAVNHSLRDPFPDGFPTSPLRSPLGEHLNPHFLPRASTPGIPGGTSTLGYHLMSLGGLSGTQTPLAAVAGGNPFASGWSDSGMGPGNRGRSETHAGMQHPRAEPEIDTSNSTSRPSTANTLPSHPSGSSKNSGQAATGRNDHPSLHAGEHLEDSVTQGQLPLPPRMRERRPEDFQVLCHVKYAGDVRLSLTAEILLDYPMPSFVGLPLKLNVTGITFDGVAVIAYIRKRVHFCFLSAEDADALIGPEQQQQRESAGDDHRPQSRPDSSASASQKRHGGLLQEIRVESEIGRKEDGKQVLKNVGKVERFVLAQVRRIFEEELVYPSFWTFLI.

The 439-residue stretch at 1 to 439 (MSIDVNWRFA…VYPSFWTFLI (439 aa)) folds into the SMP-LTD domain. 3 disordered regions span residues 70–103 (YEEDDDDHTSDASEERGEEHSSRWNSTHPELNEP), 185–274 (GWSD…PPRM), and 354–386 (PEQQQQRESAGDDHRPQSRPDSSASASQKRHGG). The span at 78–91 (TSDASEERGEEHSS) shows a compositional bias: basic and acidic residues. Over residues 215-245 (DTSNSTSRPSTANTLPSHPSGSSKNSGQAAT) the composition is skewed to polar residues. 2 stretches are compositionally biased toward basic and acidic residues: residues 247–261 (RNDHPSLHAGEHLED) and 362–371 (SAGDDHRPQS).

This sequence belongs to the MDM12 family. Component of the ER-mitochondria encounter structure (ERMES) or MDM complex, composed of mmm1, mdm10, mdm12 and mdm34. A mmm1 homodimer associates with one molecule of mdm12 on each side in a pairwise head-to-tail manner, and the SMP-LTD domains of mmm1 and mdm12 generate a continuous hydrophobic tunnel for phospholipid trafficking.

It is found in the mitochondrion outer membrane. The protein resides in the endoplasmic reticulum membrane. Functionally, component of the ERMES/MDM complex, which serves as a molecular tether to connect the endoplasmic reticulum (ER) and mitochondria. Components of this complex are involved in the control of mitochondrial shape and protein biogenesis, and function in nonvesicular lipid trafficking between the ER and mitochondria. Mdm12 is required for the interaction of the ER-resident membrane protein mmm1 and the outer mitochondrial membrane-resident beta-barrel protein mdm10. The mdm12-mmm1 subcomplex functions in the major beta-barrel assembly pathway that is responsible for biogenesis of all mitochondrial outer membrane beta-barrel proteins, and acts in a late step after the SAM complex. The mdm10-mdm12-mmm1 subcomplex further acts in the TOM40-specific pathway after the action of the mdm12-mmm1 complex. Essential for establishing and maintaining the structure of mitochondria and maintenance of mtDNA nucleoids. This chain is Mitochondrial distribution and morphology protein 12, found in Aspergillus fumigatus (strain CBS 144.89 / FGSC A1163 / CEA10) (Neosartorya fumigata).